The chain runs to 225 residues: Urease accessory protein UreG (225 aa).

25 to 32 (GPVGAGKT) lines the GTP pocket.

Belongs to the SIMIBI class G3E GTPase family. UreG subfamily. In terms of assembly, homodimer. UreD, UreF and UreG form a complex that acts as a GTP-hydrolysis-dependent molecular chaperone, activating the urease apoprotein by helping to assemble the nickel containing metallocenter of UreC. The UreE protein probably delivers the nickel.

It localises to the cytoplasm. Functionally, facilitates the functional incorporation of the urease nickel metallocenter. This process requires GTP hydrolysis, probably effectuated by UreG. This chain is Urease accessory protein UreG, found in Haemophilus influenzae (strain 86-028NP).